The sequence spans 67 residues: MARITVEDCLEKIPNRFQLVLAATYRARMLSQGHAARIESKNKPAVTALREIAAGKVGLEMLKKVPN.

Belongs to the RNA polymerase subunit omega family. In terms of assembly, the RNAP catalytic core consists of 2 alpha, 1 beta, 1 beta' and 1 omega subunit. When a sigma factor is associated with the core the holoenzyme is formed, which can initiate transcription.

It carries out the reaction RNA(n) + a ribonucleoside 5'-triphosphate = RNA(n+1) + diphosphate. Promotes RNA polymerase assembly. Latches the N- and C-terminal regions of the beta' subunit thereby facilitating its interaction with the beta and alpha subunits. This chain is DNA-directed RNA polymerase subunit omega, found in Polaromonas naphthalenivorans (strain CJ2).